Consider the following 302-residue polypeptide: B3 domain-containing protein At3g17010 (302 aa).

Positions 21–116 (FFKIFQRADL…VFHVNIYEQN (96 aa)) form a DNA-binding region, TF-B3 1. Residues 123–192 (PRKFQTMGPS…KVKKKSKSKS (70 aa)) are disordered. Positions 135–174 (IKKEEGENSLIDVKKEEESDESPGRAEFLVRKKKTEDSKS) are enriched in basic and acidic residues. The span at 175–192 (SKKKMTRNKVKKKSKSKS) shows a compositional bias: basic residues. Positions 199–292 (VPEFKITIRK…EFVLLTSKKN (94 aa)) form a DNA-binding region, TF-B3 2.

The protein resides in the nucleus. The sequence is that of B3 domain-containing protein At3g17010 from Arabidopsis thaliana (Mouse-ear cress).